Consider the following 353-residue polypeptide: Photosystem II D2 protein (353 aa).

Position 2 is an N-acetylthreonine (Thr2). Thr2 is modified (phosphothreonine). The chain crosses the membrane as a helical span at residues 41–61; that stretch reads CAYFALGGWFTGTTFVTSWYT. Chlorophyll a is bound at residue His118. Residues 125 to 141 traverse the membrane as a helical segment; that stretch reads GFMLRQFELARSVQLRP. Pheophytin a-binding residues include Gln130 and Asn143. The chain crosses the membrane as a helical span at residues 153-166; it reads VFVSVFLIYPLGQS. Residue His198 participates in chlorophyll a binding. Residues 208 to 228 form a helical membrane-spanning segment; it reads AALLCAIHGATVENTLFEDGD. 2 residues coordinate a plastoquinone: His215 and Phe262. His215 is a Fe cation binding site. Fe cation is bound at residue His269. The chain crosses the membrane as a helical span at residues 279 to 295; the sequence is GLWMSALGVVGLALNLR.

It belongs to the reaction center PufL/M/PsbA/D family. As to quaternary structure, PSII is composed of 1 copy each of membrane proteins PsbA, PsbB, PsbC, PsbD, PsbE, PsbF, PsbH, PsbI, PsbJ, PsbK, PsbL, PsbM, PsbT, PsbX, PsbY, PsbZ, Psb30/Ycf12, at least 3 peripheral proteins of the oxygen-evolving complex and a large number of cofactors. It forms dimeric complexes. The D1/D2 heterodimer binds P680, chlorophylls that are the primary electron donor of PSII, and subsequent electron acceptors. It shares a non-heme iron and each subunit binds pheophytin, quinone, additional chlorophylls, carotenoids and lipids. There is also a Cl(-1) ion associated with D1 and D2, which is required for oxygen evolution. The PSII complex binds additional chlorophylls, carotenoids and specific lipids. serves as cofactor.

The protein resides in the plastid. Its subcellular location is the chloroplast thylakoid membrane. It carries out the reaction 2 a plastoquinone + 4 hnu + 2 H2O = 2 a plastoquinol + O2. Photosystem II (PSII) is a light-driven water:plastoquinone oxidoreductase that uses light energy to abstract electrons from H(2)O, generating O(2) and a proton gradient subsequently used for ATP formation. It consists of a core antenna complex that captures photons, and an electron transfer chain that converts photonic excitation into a charge separation. The D1/D2 (PsbA/PsbD) reaction center heterodimer binds P680, the primary electron donor of PSII as well as several subsequent electron acceptors. D2 is needed for assembly of a stable PSII complex. The sequence is that of Photosystem II D2 protein from Olimarabidopsis pumila (Dwarf rocket).